Reading from the N-terminus, the 64-residue chain is Large ribosomal subunit protein bL35 (64 aa).

Residues 1–28 (MPKMKTHSGAKKRFKLTGSGKLKRQQAN) are disordered.

It belongs to the bacterial ribosomal protein bL35 family.

This is Large ribosomal subunit protein bL35 from Renibacterium salmoninarum (strain ATCC 33209 / DSM 20767 / JCM 11484 / NBRC 15589 / NCIMB 2235).